The following is a 164-amino-acid chain: UPF0262 protein Saro_0143 (164 aa).

This sequence belongs to the UPF0262 family.

In Novosphingobium aromaticivorans (strain ATCC 700278 / DSM 12444 / CCUG 56034 / CIP 105152 / NBRC 16084 / F199), this protein is UPF0262 protein Saro_0143.